The primary structure comprises 253 residues: MKHINLSFAACGFLGIYHLGAASALCRHGKKLVKDVKAFAGASAGSLVASVLLTAPEKIEECNQFTYKFAEEIRRQSFGAVTPGYDFMARLRSGMESILPPSAHELAQNRLHVSITNAKTRENHLVSTFSSREDLIKVLLASSFVPIYAGLKLVEYKGQKWVDGGLTNALPILPVGRTVTISPFSGRLDISPQDKGQLDLYVNIAKQDIMLSLANLVRLNQALFPPSKRKMESLYQCGFDDTVKFLLKENWFE.

The 171-residue stretch at 6–176 (LSFAACGFLG…TNALPILPVG (171 aa)) folds into the PNPLA domain. The short motif at 41–45 (GASAG) is the GXSXG element. Ser43 (nucleophile) is an active-site residue. Asp163 serves as the catalytic Proton acceptor. The DGA/G motif lies at 163–165 (DGG).

Expressed in all tissues examined, including heart, brain, placenta, lung, liver, muscle, kidney, pancreas and spleen.

The protein resides in the mitochondrion. It catalyses the reaction a triacylglycerol + H2O = a diacylglycerol + a fatty acid + H(+). The enzyme catalyses a 1,2-diacyl-sn-glycero-3-phosphocholine + H2O = a 1-acyl-sn-glycero-3-phosphocholine + a fatty acid + H(+). It carries out the reaction an all-trans-retinyl ester + H2O = all-trans-retinol + a fatty acid + H(+). The catalysed reaction is 2 a 1-acylglycerol = a 1,2-diacylglycerol + glycerol. It catalyses the reaction a 1-acylglycerol + a 1,2-diacylglycerol = a triacylglycerol + glycerol. The enzyme catalyses a 1-acylglycerol + a 1,3-diacylglycerol = a triacylglycerol + glycerol. It carries out the reaction a triacylglycerol + H2O = a 1,2-diacylglycerol + a fatty acid + H(+). The catalysed reaction is a triacylglycerol + H2O = a 1,3-diacylglycerol + a fatty acid + H(+). It catalyses the reaction a triacylglycerol + all-trans-retinol = an all-trans-retinyl ester + a diacylglycerol. The enzyme catalyses 2 1-(9Z-octadecenoyl)-glycerol = 1,2-di-(9Z-octadecenoyl)-glycerol + glycerol. It carries out the reaction 1-(9Z-octadecenoyl)-glycerol + 1,2-di-(9Z-octadecenoyl)-glycerol = 1,2,3-tri-(9Z-octadecenoyl)-glycerol + glycerol. The catalysed reaction is 1-(9Z-octadecenoyl)-glycerol + 1,3-di-(9Z-octadecenoyl)-glycerol = 1,2,3-tri-(9Z-octadecenoyl)-glycerol + glycerol. It catalyses the reaction 1,2-di-(9Z-octadecenoyl)-glycerol + (9Z)-octadecenoate + H(+) = 1,2,3-tri-(9Z-octadecenoyl)-glycerol + H2O. The enzyme catalyses 1,2,3-tri-(9Z-octadecenoyl)-glycerol + H2O = 1,3-di-(9Z-octadecenoyl)-glycerol + (9Z)-octadecenoate + H(+). It carries out the reaction all-trans-retinyl hexadecanoate + H2O = all-trans-retinol + hexadecanoate + H(+). The catalysed reaction is 1,2,3-tri-(9Z-octadecenoyl)-glycerol + all-trans-retinol = all-trans-retinyl 9Z-octadecenoate + di-(9Z)-octadecenoylglycerol. Its activity is regulated as follows. The triglyceride lipase activity is inhibited by BEL ((E)-6-(bromomethylene)-3-(1-naphthalenyl)-2H-tetrahydropyran-2-one), a suicide substrate inhibitor. In terms of biological role, has abundant triacylglycerol lipase activity. Transfers fatty acid from triglyceride to retinol, hydrolyzes retinylesters, and generates 1,3-diacylglycerol from triglycerides. Additionally possesses acylglycerol transacylase and phospholipase A2 activities. The polypeptide is Patatin-like phospholipase domain-containing protein 4 (Homo sapiens (Human)).